Consider the following 377-residue polypeptide: Dual-specificity RNA methyltransferase RlmN (377 aa).

Catalysis depends on glutamate 102, which acts as the Proton acceptor. The Radical SAM core domain maps to 108–345 (EPDRRTLCVS…AVVRKNRGGD (238 aa)). Cysteine 115 and cysteine 350 are joined by a disulfide. 3 residues coordinate [4Fe-4S] cluster: cysteine 122, cysteine 126, and cysteine 129. S-adenosyl-L-methionine contacts are provided by residues 177 to 178 (GE), serine 209, 231 to 233 (SLN), and asparagine 307. Cysteine 350 (S-methylcysteine intermediate) is an active-site residue. The disordered stretch occupies residues 354–377 (AAEGGPGDPRRPAPPPLTRLPAAG).

The protein belongs to the radical SAM superfamily. RlmN family. Requires [4Fe-4S] cluster as cofactor.

The protein localises to the cytoplasm. The catalysed reaction is adenosine(2503) in 23S rRNA + 2 reduced [2Fe-2S]-[ferredoxin] + 2 S-adenosyl-L-methionine = 2-methyladenosine(2503) in 23S rRNA + 5'-deoxyadenosine + L-methionine + 2 oxidized [2Fe-2S]-[ferredoxin] + S-adenosyl-L-homocysteine. It carries out the reaction adenosine(37) in tRNA + 2 reduced [2Fe-2S]-[ferredoxin] + 2 S-adenosyl-L-methionine = 2-methyladenosine(37) in tRNA + 5'-deoxyadenosine + L-methionine + 2 oxidized [2Fe-2S]-[ferredoxin] + S-adenosyl-L-homocysteine. Its function is as follows. Specifically methylates position 2 of adenine 2503 in 23S rRNA and position 2 of adenine 37 in tRNAs. m2A2503 modification seems to play a crucial role in the proofreading step occurring at the peptidyl transferase center and thus would serve to optimize ribosomal fidelity. The chain is Dual-specificity RNA methyltransferase RlmN from Anaeromyxobacter sp. (strain Fw109-5).